We begin with the raw amino-acid sequence, 348 residues long: Interferon regulatory factor 2 (348 aa).

The IRF tryptophan pentad repeat DNA-binding region spans 5–113; it reads RMRMRPWLEE…NAFRVYRMLP (109 aa). 2 positions are modified to N6-acetyllysine: Lys75 and Lys78. Residues 117 to 137 are disordered; the sequence is RPSKKGKKTKSEKDDKFKQIK. Over residues 125–137 the composition is skewed to basic and acidic residues; sequence TKSEKDDKFKQIK. Residues Lys137, Lys164, and Lys291 each participate in a glycyl lysine isopeptide (Lys-Gly) (interchain with G-Cter in SUMO) cross-link. The interval 311 to 348 is disordered; sequence LPQVVSTASTSSSRPDRETRASVIKKTSDITQSRVKSC. Polar residues-rich tracts occupy residues 314–323 and 339–348; these read VVSTASTSSS and DITQSRVKSC.

Belongs to the IRF family. Interacts with CREBBP in growing cells; the interaction acetylates IRF2 and regulates IRF2-dependent H4 promoter activity.

Its subcellular location is the nucleus. Specifically binds to the upstream regulatory region of type I IFN and IFN-inducible MHC class I genes (the interferon consensus sequence (ICS)) and represses those genes. Also acts as an activator for several genes including H4 and IL7. Constitutively binds to the ISRE promoter to activate IL7. Involved in cell cycle regulation through binding the site II (HiNF-M) promoter region of H4 and activating transcription during cell growth. Antagonizes IRF1 transcriptional activation. The protein is Interferon regulatory factor 2 (IRF2) of Gallus gallus (Chicken).